Consider the following 117-residue polypeptide: UPF0344 protein GWCH70_0687 (117 aa).

The next 4 helical transmembrane spans lie at 2–22 (THAH…AVSL), 32–52 (IVQM…GLLL), 55–75 (IASI…LIGA), and 97–117 (IVAF…FDLF).

This sequence belongs to the UPF0344 family.

It is found in the cell membrane. The protein is UPF0344 protein GWCH70_0687 of Geobacillus sp. (strain WCH70).